Consider the following 56-residue polypeptide: Potassium channel toxin alpha-KTx 9.8 (56 aa).

An N-terminal signal peptide occupies residues 1–19 (MSRLFTLVLIVLAMNVMMA). Residues 20 to 28 (IISDPVVEA) constitute a propeptide that is removed on maturation. 3 disulfides stabilise this stretch: C31-C47, C34-C52, and C38-C54.

The protein belongs to the short scorpion toxin superfamily. Potassium channel inhibitor family. Alpha-KTx 09 subfamily. As to expression, expressed by the venom gland.

It localises to the secreted. Functionally, potassium channel inhibitor. The chain is Potassium channel toxin alpha-KTx 9.8 from Buthus israelis (Israeli scorpion).